A 299-amino-acid chain; its full sequence is UPF0282 protein TK1681 (299 aa).

Belongs to the UPF0282 family.

This Thermococcus kodakarensis (strain ATCC BAA-918 / JCM 12380 / KOD1) (Pyrococcus kodakaraensis (strain KOD1)) protein is UPF0282 protein TK1681.